Here is a 319-residue protein sequence, read N- to C-terminus: L-lactate dehydrogenase 2 (319 aa).

Residues V17, D38, K43, Y69, and 83 to 84 each bind NAD(+); that span reads GA. The substrate site is built by Q86 and R92. Residues S105, 122–124, and S147 contribute to the NAD(+) site; that span reads ATN. Residue 124–127 coordinates substrate; it reads NPVD. 152–155 lines the substrate pocket; sequence DSGR. Positions 157 and 172 each coordinate beta-D-fructose 1,6-bisphosphate. H179 (proton acceptor) is an active-site residue. Y224 carries the phosphotyrosine modification. T233 contributes to the substrate binding site.

Belongs to the LDH/MDH superfamily. LDH family. As to quaternary structure, homotetramer.

The protein resides in the cytoplasm. It catalyses the reaction (S)-lactate + NAD(+) = pyruvate + NADH + H(+). It functions in the pathway fermentation; pyruvate fermentation to lactate; (S)-lactate from pyruvate: step 1/1. Its activity is regulated as follows. Allosterically activated by fructose 1,6-bisphosphate (FBP). Its function is as follows. Catalyzes the conversion of lactate to pyruvate. The sequence is that of L-lactate dehydrogenase 2 from Peribacillus psychrosaccharolyticus (Bacillus psychrosaccharolyticus).